Consider the following 343-residue polypeptide: N-acetyl-gamma-glutamyl-phosphate reductase (343 aa).

Cys149 is an active-site residue.

The protein belongs to the NAGSA dehydrogenase family. Type 1 subfamily.

Its subcellular location is the cytoplasm. The catalysed reaction is N-acetyl-L-glutamate 5-semialdehyde + phosphate + NADP(+) = N-acetyl-L-glutamyl 5-phosphate + NADPH + H(+). It participates in amino-acid biosynthesis; L-arginine biosynthesis; N(2)-acetyl-L-ornithine from L-glutamate: step 3/4. In terms of biological role, catalyzes the NADPH-dependent reduction of N-acetyl-5-glutamyl phosphate to yield N-acetyl-L-glutamate 5-semialdehyde. This Methanococcus maripaludis (strain C6 / ATCC BAA-1332) protein is N-acetyl-gamma-glutamyl-phosphate reductase.